The primary structure comprises 252 residues: Triosephosphate isomerase (252 aa).

Position 9-11 (9-11) interacts with substrate; that stretch reads NWK. His95 acts as the Electrophile in catalysis. The Proton acceptor role is filled by Glu167. Substrate contacts are provided by residues Gly173, Ser211, and 232–233; that span reads GG.

It belongs to the triosephosphate isomerase family. Homodimer.

It localises to the cytoplasm. The catalysed reaction is D-glyceraldehyde 3-phosphate = dihydroxyacetone phosphate. It functions in the pathway carbohydrate biosynthesis; gluconeogenesis. The protein operates within carbohydrate degradation; glycolysis; D-glyceraldehyde 3-phosphate from glycerone phosphate: step 1/1. Functionally, involved in the gluconeogenesis. Catalyzes stereospecifically the conversion of dihydroxyacetone phosphate (DHAP) to D-glyceraldehyde-3-phosphate (G3P). The protein is Triosephosphate isomerase of Marinobacter nauticus (strain ATCC 700491 / DSM 11845 / VT8) (Marinobacter aquaeolei).